The following is a 570-amino-acid chain: Grayanic acid biosynthesis cluster cytochrome P450 monooxygenase (570 aa).

Residues Ile-9–Ile-29 traverse the membrane as a helical segment. N-linked (GlcNAc...) asparagine glycosylation occurs at Asn-191. Cys-510 lines the heme pocket.

It belongs to the cytochrome P450 family. Heme is required as a cofactor.

Its subcellular location is the membrane. The protein operates within secondary metabolite biosynthesis. Non-reducing polyketide synthase; part of the gene cluster that mediates the biosynthesis of orcinol depsidone grayanic acid (GRA), the only major secondary metabolite known in C.grayi. The first step consists in the ring and depside synthesis by PKS16 leading to 4-O-demethylsphaerophorin, involving different orcinol-like rings, one with acetyl CoA and the other with octanoyl CoA as the starter. Further depsidone formation by the GRA cluster-specific cytochrome P450 leads to 4-O-demethylgrayanic acid. Finally, the cluster specific O-methyltransferase probably converts the 4-O-demethylgrayanic acid into grayanic acid. This chain is Grayanic acid biosynthesis cluster cytochrome P450 monooxygenase, found in Cladonia grayi (Gray's cup lichen).